We begin with the raw amino-acid sequence, 1231 residues long: Cohesin subunit SA-2 (1231 aa).

N-acetylmethionine is present on methionine 1. The disordered stretch occupies residues 1–75; the sequence is MIAAPEIPTD…GPNRMNGHHQ (75 aa). The span at 36–48 shows a compositional bias: basic residues; sequence KQGKGKTCKKGKK. The SCD domain occupies 293 to 378; it reads FVHRYRDAIA…SRFKDRIVSM (86 aa). N6-acetyllysine is present on lysine 607. Residues serine 1058, serine 1061, serine 1064, and serine 1065 each carry the phosphoserine modification. Residues 1064 to 1083 form a disordered region; sequence SSRGSTVRSKKSKPSTGKRK. Over residues 1071-1082 the composition is skewed to basic residues; that stretch reads RSKKSKPSTGKR. A Phosphothreonine modification is found at threonine 1112. Residues serine 1177 and serine 1178 each carry the phosphoserine modification.

It belongs to the SCC3 family. As to quaternary structure, interacts directly with RAD21 in cohesin complex. Cohesin complexes are composed of a heterodimer between a SMC1 protein (SMC1A or SMC1B) and SMC3, which are attached via their hinge domain, and RAD21 which link them at their heads, and one STAG protein (STAG1, STAG2 or STAG3). In cohesin complexes, STAG2 is mutually exclusive with STAG1 and STAG3. Phosphorylated by PLK1. The large dissociation of cohesin from chromosome arms during prophase is partly due to its phosphorylation.

It is found in the nucleus. The protein resides in the chromosome. It localises to the centromere. Component of cohesin complex, a complex required for the cohesion of sister chromatids after DNA replication. The cohesin complex apparently forms a large proteinaceous ring within which sister chromatids can be trapped. At anaphase, the complex is cleaved and dissociates from chromatin, allowing sister chromatids to segregate. The cohesin complex may also play a role in spindle pole assembly during mitosis. This Homo sapiens (Human) protein is Cohesin subunit SA-2 (STAG2).